A 429-amino-acid chain; its full sequence is Probable M18 family aminopeptidase 2 (429 aa).

The Zn(2+) site is built by His82, His156, and His401.

Belongs to the peptidase M18 family. Requires Zn(2+) as cofactor.

This chain is Probable M18 family aminopeptidase 2, found in Pseudomonas paraeruginosa (strain DSM 24068 / PA7) (Pseudomonas aeruginosa (strain PA7)).